The sequence spans 483 residues: Deoxyribodipyrimidine photo-lyase (483 aa).

The region spanning 2-136 is the Photolyase/cryptochrome alpha/beta domain; the sequence is QKNLIWFRND…LVKGFHDNLL (135 aa). (6R)-5,10-methylene-5,6,7,8-tetrahydrofolate-binding residues include asparagine 109 and glutamate 110. FAD is bound at residue tyrosine 225. Arginine 229 lines the DNA pocket. 237–241 contacts FAD; sequence TSMLS. 2 interaction with DNA regions span residues 278-285 and 345-346; these read QILWREFY and NR. 376-378 is an FAD binding site; it reads DGD. Position 408 (glutamine 408) interacts with DNA.

It belongs to the DNA photolyase class-1 family. Monomer. The cofactor is FAD. Requires (6R)-5,10-methylene-5,6,7,8-tetrahydrofolate as cofactor.

It carries out the reaction cyclobutadipyrimidine (in DNA) = 2 pyrimidine residues (in DNA).. In terms of biological role, involved in repair of UV radiation-induced DNA damage. Catalyzes the light-dependent monomerization (300-600 nm) of cyclobutyl pyrimidine dimers (in cis-syn configuration), which are formed between adjacent bases on the same DNA strand upon exposure to ultraviolet radiation. This chain is Deoxyribodipyrimidine photo-lyase (phrB), found in Buchnera aphidicola subsp. Acyrthosiphon pisum (strain APS) (Acyrthosiphon pisum symbiotic bacterium).